The chain runs to 156 residues: Endogenous retrovirus group K member 19 Pro protein (156 aa).

One can recognise a Peptidase A2 domain in the interval 21-96 (FEGLVDTGAD…IPLNLWGRDL (76 aa)). Residue Asp26 is part of the active site. The region spanning 111–156 (YSPTSQKIMTKMGYILGKGLGKNEDGIKIPVEAKINQKREGIGYPF) is the G-patch domain.

Belongs to the peptidase A2 family. HERV class-II K(HML-2) subfamily. Active as a homodimer. Autoproteolytically processed at the N-terminus. Expected C-terminal autoprocessing not detected. The sequence shown is that of the processed Pro protein.

The enzyme catalyses Processing at the authentic HIV-1 PR recognition site and release of the mature p17 matrix and the p24 capsid protein, as a result of the cleavage of the -SQNY-|-PIVQ- cleavage site.. Retroviral proteases have roles in the processing of the primary translation products and the maturation of the viral particle. Endogenous Pro proteins may have kept, lost or modified their original function during evolution. The polypeptide is Endogenous retrovirus group K member 19 Pro protein (ERVK-19) (Homo sapiens (Human)).